The sequence spans 156 residues: Non-structural protein 2 (156 aa).

It belongs to the pneumovirus non-structural protein 2 family.

The protein resides in the host cytoplasm. Plays a major role in antagonizing the type I IFN-mediated antiviral response. May also inhibit viral transcription and RNA replication. The protein is Non-structural protein 2 (1B) of Mus musculus (Mouse).